The sequence spans 312 residues: Malate dehydrogenase (312 aa).

NAD(+) is bound by residues 12-17 (GAGFTG) and aspartate 36. Substrate is bound by residues arginine 87 and arginine 93. Residues asparagine 100 and 123–125 (LTN) each bind NAD(+). Residue asparagine 125 participates in substrate binding. Serine 149 carries the phosphoserine modification. A substrate-binding site is contributed by arginine 156. Histidine 180 (proton acceptor) is an active-site residue.

This sequence belongs to the LDH/MDH superfamily. MDH type 3 family.

The catalysed reaction is (S)-malate + NAD(+) = oxaloacetate + NADH + H(+). In terms of biological role, catalyzes the reversible oxidation of malate to oxaloacetate. This is Malate dehydrogenase from Bacillus mycoides (strain KBAB4) (Bacillus weihenstephanensis).